Reading from the N-terminus, the 458-residue chain is ATP synthase subunit beta (458 aa).

G148–T155 contributes to the ATP binding site.

This sequence belongs to the ATPase alpha/beta chains family. In terms of assembly, F-type ATPases have 2 components, CF(1) - the catalytic core - and CF(0) - the membrane proton channel. CF(1) has five subunits: alpha(3), beta(3), gamma(1), delta(1), epsilon(1). CF(0) has three main subunits: a(1), b(2) and c(9-12). The alpha and beta chains form an alternating ring which encloses part of the gamma chain. CF(1) is attached to CF(0) by a central stalk formed by the gamma and epsilon chains, while a peripheral stalk is formed by the delta and b chains.

It is found in the cell inner membrane. It catalyses the reaction ATP + H2O + 4 H(+)(in) = ADP + phosphate + 5 H(+)(out). Functionally, produces ATP from ADP in the presence of a proton gradient across the membrane. The catalytic sites are hosted primarily by the beta subunits. In Shewanella pealeana (strain ATCC 700345 / ANG-SQ1), this protein is ATP synthase subunit beta.